A 707-amino-acid chain; its full sequence is Lipase maturation factor 2 (707 aa).

10 helical membrane passes run 10 to 30, 78 to 98, 102 to 122, 123 to 143, 165 to 185, 227 to 247, 259 to 279, 310 to 330, 364 to 384, and 399 to 419; these read LFLQ…YTQI, LELL…LSPL, VIYL…QVFL, YFQW…VAPL, DLPF…SGVV, LSVV…FAPI, VLLQ…LMTL, ALLA…LAYG, LTLP…LSAL, and AVVQ…ISLV. Asparagine 489 and asparagine 616 each carry an N-linked (GlcNAc...) asparagine glycan. Residues 637–657 traverse the membrane as a helical segment; that stretch reads ALLWGLLMAVGAVRFVQALLA. The interval 665-707 is disordered; that stretch reads PLAPVSGEKRRPASQKDSGAASEQATAAPNPCSSSSRTTRRKK. A compositionally biased stretch (polar residues) spans 679–691; it reads QKDSGAASEQATA.

This sequence belongs to the lipase maturation factor family.

Its subcellular location is the endoplasmic reticulum membrane. Its function is as follows. Involved in the maturation of specific proteins in the endoplasmic reticulum. May be required for maturation and transport of active lipoprotein lipase (LPL) through the secretory pathway. The protein is Lipase maturation factor 2 (LMF2) of Homo sapiens (Human).